Reading from the N-terminus, the 419-residue chain is Tol-Pal system protein TolB (419 aa).

Residues 1-19 (MCNRIISLFLLLFTGQVIA) form the signal peptide.

Belongs to the TolB family. In terms of assembly, the Tol-Pal system is composed of five core proteins: the inner membrane proteins TolA, TolQ and TolR, the periplasmic protein TolB and the outer membrane protein Pal. They form a network linking the inner and outer membranes and the peptidoglycan layer.

The protein localises to the periplasm. Part of the Tol-Pal system, which plays a role in outer membrane invagination during cell division and is important for maintaining outer membrane integrity. The polypeptide is Tol-Pal system protein TolB (Legionella pneumophila (strain Paris)).